Consider the following 440-residue polypeptide: GTPase Der (440 aa).

2 consecutive EngA-type G domains span residues 3 to 168 (PIIA…GKMD) and 177 to 353 (LKLA…EEYT). GTP contacts are provided by residues 9–16 (GRPNVGKS), 56–60 (DTGGL), 119–122 (NKID), 183–190 (GKPNAGKS), 230–234 (DTAGI), and 295–298 (NKWD). The KH-like domain occupies 354–438 (KRISTGLLNT…PIMISFENKS (85 aa)).

This sequence belongs to the TRAFAC class TrmE-Era-EngA-EngB-Septin-like GTPase superfamily. EngA (Der) GTPase family. In terms of assembly, associates with the 50S ribosomal subunit.

Its function is as follows. GTPase that plays an essential role in the late steps of ribosome biogenesis. The chain is GTPase Der from Fusobacterium nucleatum subsp. nucleatum (strain ATCC 25586 / DSM 15643 / BCRC 10681 / CIP 101130 / JCM 8532 / KCTC 2640 / LMG 13131 / VPI 4355).